A 223-amino-acid chain; its full sequence is Ribonuclease T (223 aa).

Residues 20–195 (VVIDVETAGF…YDTERTAELF (176 aa)) enclose the Exonuclease domain. Positions 23, 25, 182, and 187 each coordinate Mg(2+). Residue His182 is the Proton donor/acceptor of the active site.

This sequence belongs to the RNase T family. As to quaternary structure, homodimer. Requires Mg(2+) as cofactor.

In terms of biological role, trims short 3' overhangs of a variety of RNA species, leaving a one or two nucleotide 3' overhang. Responsible for the end-turnover of tRNA: specifically removes the terminal AMP residue from uncharged tRNA (tRNA-C-C-A). Also appears to be involved in tRNA biosynthesis. The polypeptide is Ribonuclease T (Photobacterium profundum (strain SS9)).